A 589-amino-acid polypeptide reads, in one-letter code: UvrABC system protein C (589 aa).

Positions Glu-10–Ile-87 constitute a GIY-YIG domain. Positions Ser-197–Ile-232 constitute a UVR domain.

It belongs to the UvrC family. As to quaternary structure, interacts with UvrB in an incision complex.

The protein resides in the cytoplasm. Its function is as follows. The UvrABC repair system catalyzes the recognition and processing of DNA lesions. UvrC both incises the 5' and 3' sides of the lesion. The N-terminal half is responsible for the 3' incision and the C-terminal half is responsible for the 5' incision. The sequence is that of UvrABC system protein C from Fusobacterium nucleatum subsp. nucleatum (strain ATCC 25586 / DSM 15643 / BCRC 10681 / CIP 101130 / JCM 8532 / KCTC 2640 / LMG 13131 / VPI 4355).